A 1935-amino-acid polypeptide reads, in one-letter code: Myosin-7 (1935 aa).

The Myosin N-terminal SH3-like domain occupies 32 to 81 (DLKKDVFVPDDKQEFVKAKIVSREGGKVTAETEYGKTVTVKEDQVMQQNP). One can recognise a Myosin motor domain in the interval 85 to 778 (DKIEDMAMLT…LLGLLEEMRD (694 aa)). An N6,N6,N6-trimethyllysine modification is found at Lys129. Position 178–185 (178–185 (GESGAGKT)) interacts with ATP. A Phosphothreonine modification is found at Thr378. Actin-binding regions lie at residues 655–677 (LNKLMTNLRSTHPHFVRCIIPNE) and 757–771 (KFGHTKVFFKAGLLG). In terms of domain architecture, IQ spans 781 to 810 (LSRIITRIQAQSRGVLARMEYKKLLERRDS). Positions 839-1935 (LLKSAEREKE…DIGTKGLNEE (1097 aa)) form a coiled coil. A phosphoserine mark is found at Ser1137 and Ser1269. Thr1282 is subject to Phosphothreonine. Tyr1308 carries the phosphotyrosine modification. The residue at position 1309 (Thr1309) is a Phosphothreonine. Ser1510 is modified (phosphoserine). Position 1513 is a phosphothreonine (Thr1513). Residues 1907-1935 (EERADIAESQVNKLRAKSRDIGTKGLNEE) are disordered. The span at 1923-1935 (KSRDIGTKGLNEE) shows a compositional bias: basic and acidic residues.

Belongs to the TRAFAC class myosin-kinesin ATPase superfamily. Myosin family. Muscle myosin is a hexameric protein that consists of 2 heavy chain subunits (MHC), 2 alkali light chain subunits (MLC) and 2 regulatory light chain subunits (MLC-2). Interacts with ECPAS. Interacts (via C-terminus) with LRRC39. Both wild type and variant Gln-403 are detected in skeletal muscle (at protein level).

Its subcellular location is the cytoplasm. It localises to the myofibril. The protein resides in the sarcomere. In terms of biological role, myosins are actin-based motor molecules with ATPase activity essential for muscle contraction. Forms regular bipolar thick filaments that, together with actin thin filaments, constitute the fundamental contractile unit of skeletal and cardiac muscle. The chain is Myosin-7 (MYH7) from Homo sapiens (Human).